A 597-amino-acid polypeptide reads, in one-letter code: Probable translation initiation factor IF-2 (597 aa).

A tr-type G domain is found at 13-229; it reads LRTPIVCVMG…LLGLAQKFLE (217 aa). Residues 22 to 29 are G1; that stretch reads GHVDHGKT. 22-29 is a binding site for GTP; that stretch reads GHVDHGKT. The G2 stretch occupies residues 47-51; the sequence is AITQH. A G3 region spans residues 84 to 87; it reads DTPG. Residues 84-88 and 138-141 contribute to the GTP site; these read DTPGH and NKID. Residues 138-141 are G4; the sequence is NKID. Residues 206–208 are G5; the sequence is SAV.

The protein belongs to the TRAFAC class translation factor GTPase superfamily. Classic translation factor GTPase family. IF-2 subfamily.

Its function is as follows. Function in general translation initiation by promoting the binding of the formylmethionine-tRNA to ribosomes. Seems to function along with eIF-2. The chain is Probable translation initiation factor IF-2 from Methanosarcina acetivorans (strain ATCC 35395 / DSM 2834 / JCM 12185 / C2A).